The chain runs to 286 residues: MVAKILDGKQIAKDYRQGLQNQVEALKEKGFTPKLSVILVGNDGASQSYVRSKKKAAEKIGMISEIVHLEETATEEEVLNELNRLNNDDSVSGILVQVPLPKQVSEQKILEAINPDKDVDGFHPINIGKLYIDEQTFVPCTPLGIMEILKHADIDLEGKNAVVIGRSHIVGQPVSKLLLQKNASVTILHSRSKDMASYLKDADVIVSAVGKPGLVTKDVVKEGAVIIDVGNTPDENGKLKGDVDYDAVKEIAGAITPVPGGVGPLTITMVLNNTLLAEKMRRGVDS.

Residues 165–167 (GRS) and Ser-190 contribute to the NADP(+) site.

The protein belongs to the tetrahydrofolate dehydrogenase/cyclohydrolase family. As to quaternary structure, homodimer.

The catalysed reaction is (6R)-5,10-methylene-5,6,7,8-tetrahydrofolate + NADP(+) = (6R)-5,10-methenyltetrahydrofolate + NADPH. The enzyme catalyses (6R)-5,10-methenyltetrahydrofolate + H2O = (6R)-10-formyltetrahydrofolate + H(+). It functions in the pathway one-carbon metabolism; tetrahydrofolate interconversion. Catalyzes the oxidation of 5,10-methylenetetrahydrofolate to 5,10-methenyltetrahydrofolate and then the hydrolysis of 5,10-methenyltetrahydrofolate to 10-formyltetrahydrofolate. The polypeptide is Bifunctional protein FolD (Staphylococcus aureus (strain bovine RF122 / ET3-1)).